The primary structure comprises 743 residues: NAD(P)H-quinone oxidoreductase subunit 5, chloroplastic (743 aa).

A run of 16 helical transmembrane segments spans residues 9 to 29 (WIIPFLPLPVPMLIGLGLLLF), 40 to 60 (WAFQSVLLLSIVMIFSMNLSI), 89 to 109 (IDPLTSIMSILITTVGIMVLI), 125 to 145 (FAYMSFFSTSMLGLVTSSNLI), 147 to 167 (IYIFWELVGMCSYLLIGFWFT), 185 to 205 (GDFGLLLGILGFYWITGSFEF), 219 to 239 (NEVNFLFVTLCAVLLFAGAIA), 258 to 278 (TPISALIHAATMVAAGIFLVA), 284 to 304 (FIVIPHIMNLISLIGIITVFF), 327 to 347 (LGYMMLALGMGSYRSALFHLI), 354 to 374 (ALLFLGSGSVIHSMETLVGYC), 396 to 416 (NSFLLGTLSLCGIPPLACFWS), 425 to 445 (WLYSPIFAIIAWSTAGLTAFY), 551 to 571 (LFPILILILFTLFVGFLGIPF), 607 to 627 (VFSVSIASFGIYIAFFLYKPV), and 723 to 743 (YLFFYFSYVSIFLFIYYFLNL).

The protein belongs to the complex I subunit 5 family. In terms of assembly, NDH is composed of at least 16 different subunits, 5 of which are encoded in the nucleus.

The protein resides in the plastid. It is found in the chloroplast thylakoid membrane. The enzyme catalyses a plastoquinone + NADH + (n+1) H(+)(in) = a plastoquinol + NAD(+) + n H(+)(out). It catalyses the reaction a plastoquinone + NADPH + (n+1) H(+)(in) = a plastoquinol + NADP(+) + n H(+)(out). Its function is as follows. NDH shuttles electrons from NAD(P)H:plastoquinone, via FMN and iron-sulfur (Fe-S) centers, to quinones in the photosynthetic chain and possibly in a chloroplast respiratory chain. The immediate electron acceptor for the enzyme in this species is believed to be plastoquinone. Couples the redox reaction to proton translocation, and thus conserves the redox energy in a proton gradient. The chain is NAD(P)H-quinone oxidoreductase subunit 5, chloroplastic (ndhF) from Ambrosia trifida (Giant ragweed).